Here is a 127-residue protein sequence, read N- to C-terminus: Aspartate 1-decarboxylase (127 aa).

The active-site Schiff-base intermediate with substrate; via pyruvic acid is Ser25. Ser25 carries the post-translational modification Pyruvic acid (Ser). Thr57 serves as a coordination point for substrate. Tyr58 serves as the catalytic Proton donor. 73 to 75 (GAA) lines the substrate pocket.

The protein belongs to the PanD family. Heterooctamer of four alpha and four beta subunits. Requires pyruvate as cofactor. Is synthesized initially as an inactive proenzyme, which is activated by self-cleavage at a specific serine bond to produce a beta-subunit with a hydroxyl group at its C-terminus and an alpha-subunit with a pyruvoyl group at its N-terminus.

It localises to the cytoplasm. It catalyses the reaction L-aspartate + H(+) = beta-alanine + CO2. The protein operates within cofactor biosynthesis; (R)-pantothenate biosynthesis; beta-alanine from L-aspartate: step 1/1. In terms of biological role, catalyzes the pyruvoyl-dependent decarboxylation of aspartate to produce beta-alanine. This chain is Aspartate 1-decarboxylase, found in Listeria welshimeri serovar 6b (strain ATCC 35897 / DSM 20650 / CCUG 15529 / CIP 8149 / NCTC 11857 / SLCC 5334 / V8).